Consider the following 232-residue polypeptide: Large ribosomal subunit protein uL1 (232 aa).

It belongs to the universal ribosomal protein uL1 family. In terms of assembly, part of the 50S ribosomal subunit.

Its function is as follows. Binds directly to 23S rRNA. The L1 stalk is quite mobile in the ribosome, and is involved in E site tRNA release. In terms of biological role, protein L1 is also a translational repressor protein, it controls the translation of the L11 operon by binding to its mRNA. This chain is Large ribosomal subunit protein uL1, found in Burkholderia lata (strain ATCC 17760 / DSM 23089 / LMG 22485 / NCIMB 9086 / R18194 / 383).